Consider the following 666-residue polypeptide: uncharacterized protein (666 aa).

Positions 263–553 (RFDLTTLKTY…THFQMKAYLR (291 aa)) constitute an RNB domain.

This sequence belongs to the RNR ribonuclease family.

This is an uncharacterized protein from Synechocystis sp. (strain ATCC 27184 / PCC 6803 / Kazusa).